Here is a 125-residue protein sequence, read N- to C-terminus: MAFDKDAFLTALDGMTVLELNDLVKAIEEKFGVSAAAMAAPAAGGAAGGAAAAEEKTEFNVVLTEAGANKVSVIKAVREITGLGLKEAKDLVDGAPKNVKEGVAKADAEAAVKKLVEAGAKAELK.

It belongs to the bacterial ribosomal protein bL12 family. Homodimer. Part of the ribosomal stalk of the 50S ribosomal subunit. Forms a multimeric L10(L12)X complex, where L10 forms an elongated spine to which 2 to 4 L12 dimers bind in a sequential fashion. Binds GTP-bound translation factors.

In terms of biological role, forms part of the ribosomal stalk which helps the ribosome interact with GTP-bound translation factors. Is thus essential for accurate translation. The protein is Large ribosomal subunit protein bL12 of Delftia acidovorans (strain DSM 14801 / SPH-1).